The primary structure comprises 324 residues: Glutaminase 2 (324 aa).

Positions 75, 127, 171, 178, 202, 254, and 272 each coordinate substrate.

Belongs to the glutaminase family. Homotetramer.

It carries out the reaction L-glutamine + H2O = L-glutamate + NH4(+). The chain is Glutaminase 2 from Halalkalibacterium halodurans (strain ATCC BAA-125 / DSM 18197 / FERM 7344 / JCM 9153 / C-125) (Bacillus halodurans).